We begin with the raw amino-acid sequence, 559 residues long: Formate--tetrahydrofolate ligase (559 aa).

Position 68-75 (68-75 (TPAGEGKT)) interacts with ATP.

It belongs to the formate--tetrahydrofolate ligase family.

It carries out the reaction (6S)-5,6,7,8-tetrahydrofolate + formate + ATP = (6R)-10-formyltetrahydrofolate + ADP + phosphate. It participates in one-carbon metabolism; tetrahydrofolate interconversion. This Rhizobium etli (strain ATCC 51251 / DSM 11541 / JCM 21823 / NBRC 15573 / CFN 42) protein is Formate--tetrahydrofolate ligase.